The chain runs to 577 residues: Pentatricopeptide repeat-containing protein At1g63400 (577 aa).

PPR repeat units follow at residues 49-83, 84-118, 119-153, 154-188, 189-223, 224-258, 259-293, 294-328, 329-363, 364-398, 399-433, 434-468, 469-503, 504-538, and 539-573; these read GSGD…RPLP, SIFE…GISH, NLYT…GYEP, SIVT…GYRP, DTIT…GCQP, NLVT…KIEA, NVVI…GVRP, NVIT…KINP, NVVT…SIDP, DIFT…DCFP, NVVT…GLVG, NTVT…GVHP, NIMT…KMEP, TIYT…GVKP, and DVII…GPLP.

The protein belongs to the PPR family. P subfamily.

The protein is Pentatricopeptide repeat-containing protein At1g63400 of Arabidopsis thaliana (Mouse-ear cress).